Consider the following 968-residue polypeptide: RNA polymerase-associated protein RapA (968 aa).

The region spanning 164-334 (DVGRRHAPRV…FARLRLLDPN (171 aa)) is the Helicase ATP-binding domain. 177–184 (DEVGLGKT) serves as a coordination point for ATP. The DEAH box signature appears at 280–283 (DEAH). Positions 490-644 (RVEWLMGYLT…TCPTGRTVYD (155 aa)) constitute a Helicase C-terminal domain.

This sequence belongs to the SNF2/RAD54 helicase family. RapA subfamily. In terms of assembly, interacts with the RNAP. Has a higher affinity for the core RNAP than for the holoenzyme. Its ATPase activity is stimulated by binding to RNAP.

Transcription regulator that activates transcription by stimulating RNA polymerase (RNAP) recycling in case of stress conditions such as supercoiled DNA or high salt concentrations. Probably acts by releasing the RNAP, when it is trapped or immobilized on tightly supercoiled DNA. Does not activate transcription on linear DNA. Probably not involved in DNA repair. This Klebsiella pneumoniae (strain 342) protein is RNA polymerase-associated protein RapA.